The following is a 292-amino-acid chain: Ribosomal protein L11 methyltransferase (292 aa).

The S-adenosyl-L-methionine site is built by T143, G164, D186, and N228.

This sequence belongs to the methyltransferase superfamily. PrmA family.

Its subcellular location is the cytoplasm. It carries out the reaction L-lysyl-[protein] + 3 S-adenosyl-L-methionine = N(6),N(6),N(6)-trimethyl-L-lysyl-[protein] + 3 S-adenosyl-L-homocysteine + 3 H(+). Its function is as follows. Methylates ribosomal protein L11. This Aeromonas hydrophila subsp. hydrophila (strain ATCC 7966 / DSM 30187 / BCRC 13018 / CCUG 14551 / JCM 1027 / KCTC 2358 / NCIMB 9240 / NCTC 8049) protein is Ribosomal protein L11 methyltransferase.